A 354-amino-acid chain; its full sequence is Homoserine O-succinyltransferase (354 aa).

Residue C146 is the Acyl-thioester intermediate of the active site. Substrate-binding residues include K167 and S196. The active-site Proton acceptor is the H239. Residue E241 is part of the active site. R253 contacts substrate.

Belongs to the MetA family.

The protein localises to the cytoplasm. It carries out the reaction L-homoserine + succinyl-CoA = O-succinyl-L-homoserine + CoA. It participates in amino-acid biosynthesis; L-methionine biosynthesis via de novo pathway; O-succinyl-L-homoserine from L-homoserine: step 1/1. Functionally, transfers a succinyl group from succinyl-CoA to L-homoserine, forming succinyl-L-homoserine. The polypeptide is Homoserine O-succinyltransferase (Methylobacter tundripaludum (strain ATCC BAA-1195 / DSM 17260 / SV96)).